We begin with the raw amino-acid sequence, 122 residues long: Flowering-promoting factor 1-like protein 3 (122 aa).

A disordered region spans residues 16–36 (ENPGSEESSSAGDGGGGGRRK).

This sequence belongs to the FPF1 family.

This is Flowering-promoting factor 1-like protein 3 from Oryza sativa subsp. japonica (Rice).